We begin with the raw amino-acid sequence, 858 residues long: Bifunctional uridylyltransferase/uridylyl-removing enzyme (858 aa).

Residues 1 to 324 (MSAHAAPSPE…PATSGITRVL (324 aa)) form a uridylyltransferase region. The interval 325-681 (SADRFVEKQG…ARPSPIGDAL (357 aa)) is uridylyl-removing. In terms of domain architecture, HD spans 443-565 (VDQHILMVLR…VGNERYLTAL (123 aa)). 2 ACT domains span residues 682 to 763 (QVLV…PSKG) and 790 to 858 (ILSV…AIAV).

The protein belongs to the GlnD family. The cofactor is Mg(2+).

The catalysed reaction is [protein-PII]-L-tyrosine + UTP = [protein-PII]-uridylyl-L-tyrosine + diphosphate. It catalyses the reaction [protein-PII]-uridylyl-L-tyrosine + H2O = [protein-PII]-L-tyrosine + UMP + H(+). Its activity is regulated as follows. Uridylyltransferase (UTase) activity is inhibited by glutamine, while glutamine activates uridylyl-removing (UR) activity. Modifies, by uridylylation and deuridylylation, the PII regulatory proteins (GlnB and homologs), in response to the nitrogen status of the cell that GlnD senses through the glutamine level. Under low glutamine levels, catalyzes the conversion of the PII proteins and UTP to PII-UMP and PPi, while under higher glutamine levels, GlnD hydrolyzes PII-UMP to PII and UMP (deuridylylation). Thus, controls uridylylation state and activity of the PII proteins, and plays an important role in the regulation of nitrogen assimilation and metabolism. The protein is Bifunctional uridylyltransferase/uridylyl-removing enzyme of Burkholderia orbicola (strain MC0-3).